A 331-amino-acid chain; its full sequence is NADH-quinone oxidoreductase subunit H (331 aa).

The next 8 helical transmembrane spans lie at 7-27 (ALVT…AVVI), 81-101 (MIFT…FAIV), 114-134 (IGIL…LFAG), 154-174 (ISYE…VGSF), 187-207 (VWFI…GVAV), 238-258 (FFVG…TLFF), 271-291 (WLSF…FILI), and 310-330 (VCLP…LAAA).

This sequence belongs to the complex I subunit 1 family. In terms of assembly, NDH-1 is composed of 13 different subunits. Subunits NuoA, H, J, K, L, M, N constitute the membrane sector of the complex.

It is found in the cell inner membrane. The catalysed reaction is a quinone + NADH + 5 H(+)(in) = a quinol + NAD(+) + 4 H(+)(out). Its function is as follows. NDH-1 shuttles electrons from NADH, via FMN and iron-sulfur (Fe-S) centers, to quinones in the respiratory chain. The immediate electron acceptor for the enzyme in this species is believed to be ubiquinone. Couples the redox reaction to proton translocation (for every two electrons transferred, four hydrogen ions are translocated across the cytoplasmic membrane), and thus conserves the redox energy in a proton gradient. This subunit may bind ubiquinone. The chain is NADH-quinone oxidoreductase subunit H from Pseudomonas paraeruginosa (strain DSM 24068 / PA7) (Pseudomonas aeruginosa (strain PA7)).